The chain runs to 180 residues: ATP synthase subunit b (180 aa).

A helical transmembrane segment spans residues 26-48 (SMILFWKAVNTVILLGLVYYFGG).

This sequence belongs to the ATPase B chain family. In terms of assembly, F-type ATPases have 2 components, F(1) - the catalytic core - and F(0) - the membrane proton channel. F(1) has five subunits: alpha(3), beta(3), gamma(1), delta(1), epsilon(1). F(0) has three main subunits: a(1), b(2) and c(10-14). The alpha and beta chains form an alternating ring which encloses part of the gamma chain. F(1) is attached to F(0) by a central stalk formed by the gamma and epsilon chains, while a peripheral stalk is formed by the delta and b chains.

The protein resides in the cell inner membrane. F(1)F(0) ATP synthase produces ATP from ADP in the presence of a proton or sodium gradient. F-type ATPases consist of two structural domains, F(1) containing the extramembraneous catalytic core and F(0) containing the membrane proton channel, linked together by a central stalk and a peripheral stalk. During catalysis, ATP synthesis in the catalytic domain of F(1) is coupled via a rotary mechanism of the central stalk subunits to proton translocation. Its function is as follows. Component of the F(0) channel, it forms part of the peripheral stalk, linking F(1) to F(0). The protein is ATP synthase subunit b of Sulfurihydrogenibium sp. (strain YO3AOP1).